The following is a 283-amino-acid chain: Nucleotide-binding protein IL0393 (283 aa).

8–15 (GRSGSGKT) is an ATP binding site. A GTP-binding site is contributed by 56–59 (DVRN).

It belongs to the RapZ-like family.

Functionally, displays ATPase and GTPase activities. The chain is Nucleotide-binding protein IL0393 from Idiomarina loihiensis (strain ATCC BAA-735 / DSM 15497 / L2-TR).